The chain runs to 212 residues: Prolactin (212 aa).

The first 26 residues, 1–26 (MARCCKCPRLHLAVTVLACVLVFTEG), serve as a signal peptide directing secretion. 2 disulfides stabilise this stretch: C71-C185 and C202-C212.

It belongs to the somatotropin/prolactin family. In terms of tissue distribution, pituitary gland.

Its subcellular location is the secreted. The protein is Prolactin (prl) of Ictalurus punctatus (Channel catfish).